The primary structure comprises 308 residues: Palmitoyltransferase ZDHHC7 (308 aa).

The Cytoplasmic segment spans residues M1–C50. Residues A51–L71 form a helical membrane-spanning segment. At P72–D75 the chain is on the lumenal side. A helical membrane pass occupies residues F76 to S96. Over H97 to R173 the chain is Cytoplasmic. The region spanning Y130–M180 is the DHHC domain. C160 (S-palmitoyl cysteine intermediate) is an active-site residue. Residues F174 to G194 traverse the membrane as a helical segment. Topologically, residues L195 to V217 are lumenal. The helical transmembrane segment at I218–F238 threads the bilayer. Over G239–V308 the chain is Cytoplasmic.

The protein belongs to the DHHC palmitoyltransferase family. Homooligomers. Heterooligomers with ZDHHC3. Autopalmitoylated. Ubiquitously expressed, with highest levels in liver, kidney and brain. Expressed in all brain regions.

It localises to the golgi apparatus membrane. The catalysed reaction is L-cysteinyl-[protein] + hexadecanoyl-CoA = S-hexadecanoyl-L-cysteinyl-[protein] + CoA. The enzyme catalyses L-cysteinyl-[protein] + tetradecanoyl-CoA = S-tetradecanoyl-L-cysteinyl-[protein] + CoA. It carries out the reaction L-cysteinyl-[protein] + octadecanoyl-CoA = S-octadecanoyl-L-cysteinyl-[protein] + CoA. Functionally, golgi-localized palmitoyltransferase that catalyzes the addition of palmitate onto various protein substrates and therefore functions in several unrelated biological processes. Has no stringent fatty acid selectivity and in addition to palmitate can also transfer onto target proteins myristate from tetradecanoyl-CoA and stearate from octadecanoyl-CoA. Palmitoylates sex steroid hormone receptors, including ESR1, PGR and AR, thereby regulating their targeting to the plasma membrane and their function in rapid intracellular signaling upon binding of sex hormones. Palmitoylates GNAQ, a heterotrimeric G protein, regulating its dynamic localization at the plasma membrane and is thereby involved in GNAQ-dependent G protein-coupled receptor signaling pathways. Also functions in ligand-induced cell death by regulating the FAS signaling pathway through the palmitoylation and stabilization of the receptor at the plasma membrane. In epithelial cells, palmitoylates SCRIB and regulates its localization to the plasma membrane, regulating indirectly cell polarity and differentiation. Also palmitoylates JAM3 and promotes its expression at tight junctions and regulates its function in cell migration. Palmitoylates the glucose transporter GLUT4/SLC2A4 and controls the insulin-dependent translocation of GLUT4 to the plasma membrane. In brain, could also palmitoylate SNAP25 and DLG4/PSD95. Could also palmitoylate DNAJC5 and regulate its localization to the Golgi membrane. Could also palmitoylate NCDN. May play a role in follicle stimulation hormone (FSH) activation of testicular Sertoli cells. Activates pyroptosis by catalyzing palmitoylation of gasdermin-D (GSDMD). In Mus musculus (Mouse), this protein is Palmitoyltransferase ZDHHC7.